The primary structure comprises 194 residues: Adenylate kinase (194 aa).

10-15 (GAGKGT) is a binding site for ATP. The NMP stretch occupies residues 30–59 (STGDMLRAAVAQQSEIGKRAKAVMDAGQLV). Residues Thr-31, Arg-36, 57 to 59 (QLV), 85 to 88 (GYPR), and Gln-92 each bind AMP. Residues 126–142 (SRVAETIAKGGQVRSDD) are LID. Arg-127 contributes to the ATP binding site. Arg-139 and Arg-150 together coordinate AMP. Residue Ala-178 coordinates ATP.

This sequence belongs to the adenylate kinase family. In terms of assembly, monomer.

It localises to the cytoplasm. The enzyme catalyses AMP + ATP = 2 ADP. The protein operates within purine metabolism; AMP biosynthesis via salvage pathway; AMP from ADP: step 1/1. Catalyzes the reversible transfer of the terminal phosphate group between ATP and AMP. Plays an important role in cellular energy homeostasis and in adenine nucleotide metabolism. The chain is Adenylate kinase from Brucella canis (strain ATCC 23365 / NCTC 10854 / RM-666).